A 1068-amino-acid chain; its full sequence is Carbamoyl phosphate synthase large chain (1068 aa).

A carboxyphosphate synthetic domain region spans residues 1 to 401; that stretch reads MPRRTDLHRI…SLLKAVRSLE (401 aa). Positions 129, 169, 175, 176, 208, 210, 215, 241, 242, 243, 284, and 298 each coordinate ATP. One can recognise an ATP-grasp 1 domain in the interval 133–327; that stretch reads KQLMDELGQP…IAKIAAKIAV (195 aa). Residues Gln-284, Glu-298, and Asn-300 each contribute to the Mg(2+) site. Residues Gln-284, Glu-298, and Asn-300 each coordinate Mn(2+). The oligomerization domain stretch occupies residues 402–546; the sequence is IGVDHLALRE…YSTYEMENES (145 aa). Residues 547 to 935 form a carbamoyl phosphate synthetic domain region; the sequence is KKSQRPSVLV…ALYKVFEAAN (389 aa). Residues 671–867 form the ATP-grasp 2 domain; sequence ESLLAELGIP…MAEVATRIIL (197 aa). 10 residues coordinate ATP: Arg-707, Arg-746, Leu-748, Glu-752, Gly-777, Val-778, His-779, Ser-780, Gln-820, and Glu-838. Positions 820, 838, and 840 each coordinate Mg(2+). Positions 820, 838, and 840 each coordinate Mn(2+). The 133-residue stretch at 936–1068 folds into the MGS-like domain; it reads LHVPEYGKIL…ESRVFSTESI (133 aa). An allosteric domain region spans residues 936-1068; it reads LHVPEYGKIL…ESRVFSTESI (133 aa).

This sequence belongs to the CarB family. As to quaternary structure, composed of two chains; the small (or glutamine) chain promotes the hydrolysis of glutamine to ammonia, which is used by the large (or ammonia) chain to synthesize carbamoyl phosphate. Tetramer of heterodimers (alpha,beta)4. The cofactor is Mg(2+). Mn(2+) serves as cofactor.

It catalyses the reaction hydrogencarbonate + L-glutamine + 2 ATP + H2O = carbamoyl phosphate + L-glutamate + 2 ADP + phosphate + 2 H(+). It carries out the reaction hydrogencarbonate + NH4(+) + 2 ATP = carbamoyl phosphate + 2 ADP + phosphate + 2 H(+). It participates in amino-acid biosynthesis; L-arginine biosynthesis; carbamoyl phosphate from bicarbonate: step 1/1. Its pathway is pyrimidine metabolism; UMP biosynthesis via de novo pathway; (S)-dihydroorotate from bicarbonate: step 1/3. Functionally, large subunit of the glutamine-dependent carbamoyl phosphate synthetase (CPSase). CPSase catalyzes the formation of carbamoyl phosphate from the ammonia moiety of glutamine, carbonate, and phosphate donated by ATP, constituting the first step of 2 biosynthetic pathways, one leading to arginine and/or urea and the other to pyrimidine nucleotides. The large subunit (synthetase) binds the substrates ammonia (free or transferred from glutamine from the small subunit), hydrogencarbonate and ATP and carries out an ATP-coupled ligase reaction, activating hydrogencarbonate by forming carboxy phosphate which reacts with ammonia to form carbamoyl phosphate. This is Carbamoyl phosphate synthase large chain from Cutibacterium acnes (strain DSM 16379 / KPA171202) (Propionibacterium acnes).